Reading from the N-terminus, the 282-residue chain is Probable aquaporin PIP2-6 (282 aa).

2 helical membrane passes run 39-59 (ALIAEFIATLLFLYITVATVI) and 76-96 (LGIAWAFGGMIFILVYCTAGI). The NPA 1 motif lies at 102–104 (NPA). 3 helical membrane passes run 121-141 (VMYIVAQCLGGIVGVGIVKGI), 163-183 (GTALGAEIIGTFVLVYTVFSA), and 197-217 (VLAPLPIGFAVFMVHLATIPI). An NPA 2 motif is present at residues 223-225 (NPA). The chain crosses the membrane as a helical span at residues 245–265 (IFWAGPFIGALAAAAYHQYIL).

The protein belongs to the MIP/aquaporin (TC 1.A.8) family. PIP (TC 1.A.8.11) subfamily. In terms of tissue distribution, expressed in roots and leaves.

Its subcellular location is the cell membrane. Aquaporins facilitate the transport of water and small neutral solutes across cell membranes. In Oryza sativa subsp. japonica (Rice), this protein is Probable aquaporin PIP2-6 (PIP2-6).